Here is a 360-residue protein sequence, read N- to C-terminus: Protein Wnt-2 (360 aa).

An N-terminal signal peptide occupies residues 1 to 25 (MNAPLGGIWLWLPLLLTWLTPEVSS). Intrachain disulfides connect cysteine 76–cysteine 87, cysteine 127–cysteine 135, cysteine 137–cysteine 157, cysteine 206–cysteine 220, cysteine 208–cysteine 215, cysteine 278–cysteine 309, cysteine 294–cysteine 304, cysteine 308–cysteine 348, cysteine 324–cysteine 339, cysteine 326–cysteine 336, and cysteine 331–cysteine 332. The O-palmitoleoyl serine; by PORCN moiety is linked to residue serine 212. N-linked (GlcNAc...) asparagine glycosylation is present at asparagine 295.

The protein belongs to the Wnt family. In terms of processing, palmitoleoylation is required for efficient binding to frizzled receptors. Depalmitoleoylation leads to Wnt signaling pathway inhibition.

The protein localises to the secreted. The protein resides in the extracellular space. It is found in the extracellular matrix. Ligand for members of the frizzled family of seven transmembrane receptors. Functions in the canonical Wnt signaling pathway that results in activation of transcription factors of the TCF/LEF family. This Dasypus novemcinctus (Nine-banded armadillo) protein is Protein Wnt-2 (WNT2).